A 312-amino-acid chain; its full sequence is DNA-directed RNA polymerase subunit alpha (312 aa).

An alpha N-terminal domain (alpha-NTD) region spans residues 1 to 226 (MIEFEKPNIT…EHLDLFTDLT (226 aa)). Positions 244–312 (DHVLERTIEE…DLGLGLKNDK (69 aa)) are alpha C-terminal domain (alpha-CTD).

Belongs to the RNA polymerase alpha chain family. Homodimer. The RNAP catalytic core consists of 2 alpha, 1 beta, 1 beta' and 1 omega subunit. When a sigma factor is associated with the core the holoenzyme is formed, which can initiate transcription.

The enzyme catalyses RNA(n) + a ribonucleoside 5'-triphosphate = RNA(n+1) + diphosphate. In terms of biological role, DNA-dependent RNA polymerase catalyzes the transcription of DNA into RNA using the four ribonucleoside triphosphates as substrates. The chain is DNA-directed RNA polymerase subunit alpha from Streptococcus gordonii (strain Challis / ATCC 35105 / BCRC 15272 / CH1 / DL1 / V288).